The following is a 144-amino-acid chain: 3-hydroxyacyl-[acyl-carrier-protein] dehydratase FabZ (144 aa).

His-48 is a catalytic residue.

The protein belongs to the thioester dehydratase family. FabZ subfamily.

The protein resides in the cytoplasm. The enzyme catalyses a (3R)-hydroxyacyl-[ACP] = a (2E)-enoyl-[ACP] + H2O. Functionally, involved in unsaturated fatty acids biosynthesis. Catalyzes the dehydration of short chain beta-hydroxyacyl-ACPs and long chain saturated and unsaturated beta-hydroxyacyl-ACPs. The protein is 3-hydroxyacyl-[acyl-carrier-protein] dehydratase FabZ of Bacillus cereus (strain AH187).